The chain runs to 192 residues: uncharacterized protein (192 aa).

The region spanning 29–160 (HRQAAVLIPI…PLDIYRRGDS (132 aa)) is the Nudix hydrolase domain. Residues 67–89 (GAVDDTDTSVIAAALREAEEEVA) carry the Nudix box motif. Residues glutamate 83 and glutamate 87 each coordinate Mg(2+).

It belongs to the Nudix hydrolase family. PCD1 subfamily. It depends on Mn(2+) as a cofactor. Mg(2+) serves as cofactor.

Its function is as follows. Probably mediates the hydrolysis of some nucleoside diphosphate derivatives. This is an uncharacterized protein from Escherichia coli O7:K1 (strain IAI39 / ExPEC).